A 95-amino-acid polypeptide reads, in one-letter code: Protein K6 (95 aa).

The first 24 residues, 1 to 24, serve as a signal peptide directing secretion; the sequence is MAPVHVLCCVSVLLATFYLTPTES.

This is Protein K6 (K6) from Human herpesvirus 8 type P (isolate GK18) (HHV-8).